Reading from the N-terminus, the 153-residue chain is Xanthine-guanine phosphoribosyltransferase (153 aa).

5-phospho-alpha-D-ribose 1-diphosphate contacts are provided by residues 37-38, Arg69, and 88-96; these read RG and DDLVDTGGT. Arg69 is a binding site for GMP. Asp89 contacts Mg(2+). Guanine is bound by residues Asp92 and Ile135. Residues Asp92 and Ile135 each contribute to the xanthine site. Residues 92–96 and 134–135 each bind GMP; these read DTGGT and WI.

The protein belongs to the purine/pyrimidine phosphoribosyltransferase family. XGPT subfamily. As to quaternary structure, homotetramer. Mg(2+) is required as a cofactor.

It localises to the cell inner membrane. It catalyses the reaction GMP + diphosphate = guanine + 5-phospho-alpha-D-ribose 1-diphosphate. The enzyme catalyses XMP + diphosphate = xanthine + 5-phospho-alpha-D-ribose 1-diphosphate. It carries out the reaction IMP + diphosphate = hypoxanthine + 5-phospho-alpha-D-ribose 1-diphosphate. It participates in purine metabolism; GMP biosynthesis via salvage pathway; GMP from guanine: step 1/1. The protein operates within purine metabolism; XMP biosynthesis via salvage pathway; XMP from xanthine: step 1/1. In terms of biological role, purine salvage pathway enzyme that catalyzes the transfer of the ribosyl-5-phosphate group from 5-phospho-alpha-D-ribose 1-diphosphate (PRPP) to the N9 position of the 6-oxopurines guanine and xanthine to form the corresponding ribonucleotides GMP (guanosine 5'-monophosphate) and XMP (xanthosine 5'-monophosphate), with the release of PPi. To a lesser extent, also acts on hypoxanthine. The chain is Xanthine-guanine phosphoribosyltransferase from Proteus mirabilis (strain HI4320).